The following is a 48-amino-acid chain: Large ribosomal subunit protein bL33A (48 aa).

The protein belongs to the bacterial ribosomal protein bL33 family.

The chain is Large ribosomal subunit protein bL33A from Limosilactobacillus fermentum (strain NBRC 3956 / LMG 18251) (Lactobacillus fermentum).